Reading from the N-terminus, the 178-residue chain is N-alpha-acetyltransferase 20 (178 aa).

One can recognise an N-acetyltransferase domain in the interval 2-157; the sequence is TSLRPFTCDD…DAYDMRKALS (156 aa). Residues 159 to 178 are disordered; it reads DTEKKSIVPLPHPVRPEDIE.

This sequence belongs to the acetyltransferase family. ARD1 subfamily. In terms of assembly, component of the N-terminal acetyltransferase B (NatB) complex which is composed of naa20 and naa25.

The protein localises to the cytoplasm. The protein resides in the nucleus. The catalysed reaction is N-terminal L-methionyl-L-asparaginyl-[protein] + acetyl-CoA = N-terminal N(alpha)-acetyl-L-methionyl-L-asparaginyl-[protein] + CoA + H(+). It carries out the reaction N-terminal L-methionyl-L-glutaminyl-[protein] + acetyl-CoA = N-terminal N(alpha)-acetyl-L-methionyl-L-glutaminyl-[protein] + CoA + H(+). It catalyses the reaction N-terminal L-methionyl-L-aspartyl-[protein] + acetyl-CoA = N-terminal N(alpha)-acetyl-L-methionyl-L-aspartyl-[protein] + CoA + H(+). The enzyme catalyses N-terminal L-methionyl-L-glutamyl-[protein] + acetyl-CoA = N-terminal N(alpha)-acetyl-L-methionyl-L-glutamyl-[protein] + CoA + H(+). Functionally, catalytic subunit of the NatB complex which catalyzes acetylation of the N-terminal methionine residues of peptides beginning with Met-Asp, Met-Glu, Met-Asn and Met-Gln. Proteins with cell cycle functions are overrepresented in the pool of NatB substrates. Required for maintaining the structure and function of actomyosin fibers and for proper cellular migration. The polypeptide is N-alpha-acetyltransferase 20 (naa20) (Xenopus tropicalis (Western clawed frog)).